Consider the following 91-residue polypeptide: MARSLKKGAFADESLLKKVDALNAANDKQVIKTWSRRSTIYPQFVGHTIAVHDGRKHVPVYVTEDMVGHKLGEFVATRTYRGHGKDEKKSR.

Belongs to the universal ribosomal protein uS19 family.

In terms of biological role, protein S19 forms a complex with S13 that binds strongly to the 16S ribosomal RNA. In Lachnospira eligens (strain ATCC 27750 / DSM 3376 / VPI C15-48 / C15-B4) (Eubacterium eligens), this protein is Small ribosomal subunit protein uS19.